The sequence spans 828 residues: Isethionate sulfite-lyase (828 aa).

The PFL domain maps to 30–698; it reads ERVFTILESF…VVSATPNGRK (669 aa). 2-hydroxyethane-1-sulfonate contacts are provided by residues Arg187, Gln191, 466-468, and Arg676; that span reads CTE. The Cysteine radical intermediate role is filled by Cys466. Catalysis depends on Glu468, which acts as the Proton acceptor. The 124-residue stretch at 705 to 828 folds into the Glycine radical domain; sequence DGSSASHGAD…LIARTGHDVM (124 aa). Gly803 is modified (glycine radical).

It belongs to the glycyl radical enzyme (GRE) family. Homodimer. Post-translationally, requires the activating protein IseH to generate the key active site glycyl radical on Gly-803 that is involved in catalysis.

It carries out the reaction 2-hydroxyethane-1-sulfonate = acetaldehyde + sulfite + H(+). It participates in organosulfur degradation; alkanesulfonate degradation. Functionally, involved in an anaerobic respiration pathway that converts the sulfonate isethionate (2-hydroxyethanesulfonate) to ammonia, acetate and sulfide. Catalyzes the radical-mediated C-S bond cleavage of isethionate (2-hydroxyethanesulfonate) to form sulfite and acetaldehyde. Shows no activity with taurine or ethanolamine as substrates. The chain is Isethionate sulfite-lyase from Nitratidesulfovibrio vulgaris (strain ATCC 29579 / DSM 644 / CCUG 34227 / NCIMB 8303 / VKM B-1760 / Hildenborough) (Desulfovibrio vulgaris).